Reading from the N-terminus, the 477-residue chain is Ribulose bisphosphate carboxylase large chain (477 aa).

Residues 1–2 (MS) constitute a propeptide that is removed on maturation. Residue P3 is modified to N-acetylproline. The residue at position 14 (K14) is an N6,N6,N6-trimethyllysine. Substrate is bound by residues N123 and T173. K175 functions as the Proton acceptor in the catalytic mechanism. K177 is a substrate binding site. K201, D203, and E204 together coordinate Mg(2+). At K201 the chain carries N6-carboxylysine. The Proton acceptor role is filled by H294. Residues R295, H327, and S379 each contribute to the substrate site.

This sequence belongs to the RuBisCO large chain family. Type I subfamily. Heterohexadecamer of 8 large chains and 8 small chains; disulfide-linked. The disulfide link is formed within the large subunit homodimers. It depends on Mg(2+) as a cofactor. Post-translationally, the disulfide bond which can form in the large chain dimeric partners within the hexadecamer appears to be associated with oxidative stress and protein turnover.

The protein resides in the plastid. Its subcellular location is the chloroplast. The enzyme catalyses 2 (2R)-3-phosphoglycerate + 2 H(+) = D-ribulose 1,5-bisphosphate + CO2 + H2O. It catalyses the reaction D-ribulose 1,5-bisphosphate + O2 = 2-phosphoglycolate + (2R)-3-phosphoglycerate + 2 H(+). Its function is as follows. RuBisCO catalyzes two reactions: the carboxylation of D-ribulose 1,5-bisphosphate, the primary event in carbon dioxide fixation, as well as the oxidative fragmentation of the pentose substrate in the photorespiration process. Both reactions occur simultaneously and in competition at the same active site. The chain is Ribulose bisphosphate carboxylase large chain from Nicotiana otophora (Tobacco).